A 5386-amino-acid polypeptide reads, in one-letter code: Nonribosomal peptide synthetase 2 (5386 aa).

An adenylation 1 region spans residues 45 to 435 (HDANAIDFLE…QGLLECLGRV (391 aa)). The Carrier 1 domain occupies 544–617 (SPKDPIGHSV…DLIEVCRESK (74 aa)). S578 carries the O-(pantetheine 4'-phosphoryl)serine modification. A condensation 1 region spans residues 652 to 1059 (LPCTPLQEAM…VDADRHVSAI (408 aa)). Residues 1089-1482 (EKWAATDPHR…GRTDDQVKIR (394 aa)) are adenylation 2. One can recognise a Carrier 2 domain in the interval 1611-1688 (ELLSQWERDV…SLASLKKLQS (78 aa)). An O-(pantetheine 4'-phosphoryl)serine modification is found at S1648. Positions 1731–2141 (ILPCTPLQEA…ALSADTDMFP (411 aa)) are condensation 2. The interval 2166-2551 (FERTALLHPD…GRLDDQVKIR (386 aa)) is adenylation 3. The region spanning 2652–2725 (SKTESEVRNI…DLAEHLDQIS (74 aa)) is the Carrier 3 domain. Residue S2686 is modified to O-(pantetheine 4'-phosphoryl)serine. Residues 2763 to 3174 (RPCTPLQNGM…HSQIPLAKTD (412 aa)) are condensation 3. The segment at 3202–3603 (EKTAQEHPQR…GRADDQVKLR (402 aa)) is adenylation 4. The Carrier 4 domain occupies 3728–3805 (EQWSKQEEKL…RLAKSLAANS (78 aa)). The residue at position 3765 (S3765) is an O-(pantetheine 4'-phosphoryl)serine. Positions 3846–4250 (LAPCTPLQQG…LDQAINDPSA (405 aa)) are condensation 4. The Carrier 5 domain occupies 4281 to 4357 (FEWSDNAIAI…KMAQNMSMKN (77 aa)). Residue S4318 is modified to O-(pantetheine 4'-phosphoryl)serine. A condensation 5 region spans residues 4391–4802 (EEILPLTPLQ…ERAEAPVIDM (412 aa)). The tract at residues 4821 to 4842 (HTGSGHVESGEDDGQDTPSTET) is disordered. The region spanning 4840-4913 (TETTNRIRKI…KMAKLADARA (74 aa)) is the Carrier 6 domain. Residue S4874 is modified to O-(pantetheine 4'-phosphoryl)serine. The interval 4952 to 5257 (QMLPVTAGQL…VQAHLRHLND (306 aa)) is condensation 6.

It belongs to the NRP synthetase family.

It participates in siderophore biosynthesis. Its function is as follows. Nonribosomal peptide synthetase; part of the gene cluster that mediates the biosynthesis of hydroxamate-containing siderophores that play a critical role in virulence. Cochliobolus heterostrophus produces extracellular coprogen-type siderophores including coprogen, neocoprogen I and neocoprogen II, as well as the intracellular siderophore ferricrocin. The role of extracellular siderophores is to supply iron to the fungus during plant infection, and the intracellular ferricrocin is required for intracellular iron distribution and storage with a crucial role in ascus and ascospore development. SIDA2 catalyzes the conversion of L-ornithine to N(5)-hydroxyornithine, the first step in the biosynthesis of all hydroxamate-containing siderophores. The assembly of extracellular coprogen-type siderophores is then performed by the nonribosomal peptide synthetase (NRPS) NPS6 whereas the intracellular siderophore ferricrocin is assembled by NPS2. The sequence is that of Nonribosomal peptide synthetase 2 from Cochliobolus heterostrophus (strain C4 / ATCC 48331 / race T) (Southern corn leaf blight fungus).